Reading from the N-terminus, the 317-residue chain is Adenine deaminase (317 aa).

3 residues coordinate Zn(2+): histidine 14, histidine 16, and histidine 194. The active-site Proton donor is glutamate 197. Aspartate 275 contributes to the Zn(2+) binding site. Aspartate 276 contacts substrate.

It belongs to the metallo-dependent hydrolases superfamily. Adenosine and AMP deaminases family. Adenine deaminase type 2 subfamily. Zn(2+) serves as cofactor.

The enzyme catalyses adenine + H2O + H(+) = hypoxanthine + NH4(+). In terms of biological role, catalyzes the hydrolytic deamination of adenine to hypoxanthine. Plays an important role in the purine salvage pathway and in nitrogen catabolism. The chain is Adenine deaminase from Pseudomonas syringae pv. syringae (strain B728a).